Consider the following 241-residue polypeptide: Pyridoxal phosphate phosphatase PHOSPHO2 (241 aa).

Asp-8 acts as the Nucleophile in catalysis. Mg(2+)-binding residues include Asp-8 and Asp-10. Catalysis depends on Asp-10, which acts as the Proton donor. 2 residues coordinate substrate: Asp-19 and Asp-99. Mg(2+) is bound at residue Asp-179.

It belongs to the HAD-like hydrolase superfamily. PHOSPHO family. It depends on Mg(2+) as a cofactor.

The catalysed reaction is pyridoxal 5'-phosphate + H2O = pyridoxal + phosphate. Phosphatase that has high activity toward pyridoxal 5'-phosphate (PLP). Also active at much lower level toward pyrophosphate, phosphoethanolamine (PEA), phosphocholine (PCho), phospho-l-tyrosine, fructose-6-phosphate, p-nitrophenyl phosphate, and h-glycerophosphate. This Rattus norvegicus (Rat) protein is Pyridoxal phosphate phosphatase PHOSPHO2 (Phospho2).